Here is a 366-residue protein sequence, read N- to C-terminus: Inactive protein RESTRICTED TEV MOVEMENT 2 (366 aa).

One can recognise a sHSP domain in the interval 14–121; the sequence is VQYEDFVPKS…LPETSRTEAA (108 aa). An A-1 repeat occupies 129–133; that stretch reads LEEKR. The interval 129–220 is 6 X 5 AA repeats A of L-E-E-[SKR]-[ERK]; the sequence is LEEKRLLEES…LEERRLEERK (92 aa). The stretch at 135–139 is one A-2 repeat; sequence LEESR. An A-3 repeat occupies 156-160; sequence LEEKE. A B-1 repeat occupies 163–176; it reads IRKLQEEAKAKEEA. The tract at residues 163-206 is 3 X 14 AA repeats B of [IMA]-[RK]-K-L-Q-E-E-A-K-A-K-E-[EK]-[LA]; the sequence is IRKLQEEAKAKEEAEMRKLQEEAKANEEAAAKKLQEEIEAKEKL. The B-2 repeat unit spans residues 178–191; the sequence is MRKLQEEAKANEEA. The B-3 repeat unit spans residues 193–205; it reads AKKLQEEIEAKEK. Residues 206-210 form an A-4 repeat; that stretch reads LEERK. The A-5 repeat unit spans residues 211–215; that stretch reads LEERR. An A-6 repeat occupies 216-220; the sequence is LEERK. Residues 322 to 342 form a helical membrane-spanning segment; it reads LMMNVGVAALVIFALGAYVSY. The disordered stretch occupies residues 345–366; sequence CSSSSSSSSSSPSSSSSSTKPE. Low complexity predominate over residues 346–366; the sequence is SSSSSSSSSSPSSSSSSTKPE.

Belongs to the small heat shock protein (HSP20) family.

It is found in the cell membrane. Seems to not be involved in heat resistance. Unable to mediate restriction of long-distance movement of the pathogenic tobacco etch virus (TEV) without causing a hypersensitive response or inducing systemic acquired resistance. This Arabidopsis thaliana (Mouse-ear cress) protein is Inactive protein RESTRICTED TEV MOVEMENT 2 (RTM2).